Consider the following 1342-residue polypeptide: DNA-directed RNA polymerase subunit beta (1342 aa).

This sequence belongs to the RNA polymerase beta chain family. As to quaternary structure, the RNAP catalytic core consists of 2 alpha, 1 beta, 1 beta' and 1 omega subunit. When a sigma factor is associated with the core the holoenzyme is formed, which can initiate transcription.

It carries out the reaction RNA(n) + a ribonucleoside 5'-triphosphate = RNA(n+1) + diphosphate. Functionally, DNA-dependent RNA polymerase catalyzes the transcription of DNA into RNA using the four ribonucleoside triphosphates as substrates. The chain is DNA-directed RNA polymerase subunit beta from Actinobacillus pleuropneumoniae serotype 3 (strain JL03).